Here is a 95-residue protein sequence, read N- to C-terminus: Small ribosomal subunit protein uS19 (95 aa).

Belongs to the universal ribosomal protein uS19 family.

In terms of biological role, protein S19 forms a complex with S13 that binds strongly to the 16S ribosomal RNA. The chain is Small ribosomal subunit protein uS19 from Thermosipho africanus (strain TCF52B).